We begin with the raw amino-acid sequence, 229 residues long: MANHLQFNFQDATSPLMQELVKFHDHSLTILFFISALILYVLMMTSLSKLTNKNILDSQEIEMVWTVIPAFILIMLALPSIQILYLMDEIASPDITIKTVGHQWYWTYEFSDLSKESEIESYMLPTADLQNGDFRLLEVDNRISVPMDSKIRMLITSEDVLHAWTLPSMGIKVDAVPGRLNQVTFSSSLPGLFFGQCSEICGANHSFMPIAMEVIPLKTFESWIIKLSL.

The Mitochondrial intermembrane portion of the chain corresponds to 1–14 (MANHLQFNFQDATS). A helical membrane pass occupies residues 15–45 (PLMQELVKFHDHSLTILFFISALILYVLMMT). Over 46 to 59 (SLSKLTNKNILDSQ) the chain is Mitochondrial matrix. Residues 60 to 87 (EIEMVWTVIPAFILIMLALPSIQILYLM) form a helical membrane-spanning segment. Over 88 to 229 (DEIASPDITI…FESWIIKLSL (142 aa)) the chain is Mitochondrial intermembrane. Residues His162, Cys197, Glu199, Cys201, His205, and Met208 each coordinate Cu cation. Glu199 contributes to the Mg(2+) binding site.

The protein belongs to the cytochrome c oxidase subunit 2 family. In terms of assembly, component of the cytochrome c oxidase (complex IV, CIV), a multisubunit enzyme composed of 14 subunits. The complex is composed of a catalytic core of 3 subunits MT-CO1, MT-CO2 and MT-CO3, encoded in the mitochondrial DNA, and 11 supernumerary subunits COX4I, COX5A, COX5B, COX6A, COX6B, COX6C, COX7A, COX7B, COX7C, COX8 and NDUFA4, which are encoded in the nuclear genome. The complex exists as a monomer or a dimer and forms supercomplexes (SCs) in the inner mitochondrial membrane with NADH-ubiquinone oxidoreductase (complex I, CI) and ubiquinol-cytochrome c oxidoreductase (cytochrome b-c1 complex, complex III, CIII), resulting in different assemblies (supercomplex SCI(1)III(2)IV(1) and megacomplex MCI(2)III(2)IV(2)). Found in a complex with TMEM177, COA6, COX18, COX20, SCO1 and SCO2. Interacts with TMEM177 in a COX20-dependent manner. Interacts with COX20. Interacts with COX16. The cofactor is Cu cation.

It localises to the mitochondrion inner membrane. The catalysed reaction is 4 Fe(II)-[cytochrome c] + O2 + 8 H(+)(in) = 4 Fe(III)-[cytochrome c] + 2 H2O + 4 H(+)(out). Its function is as follows. Component of the cytochrome c oxidase, the last enzyme in the mitochondrial electron transport chain which drives oxidative phosphorylation. The respiratory chain contains 3 multisubunit complexes succinate dehydrogenase (complex II, CII), ubiquinol-cytochrome c oxidoreductase (cytochrome b-c1 complex, complex III, CIII) and cytochrome c oxidase (complex IV, CIV), that cooperate to transfer electrons derived from NADH and succinate to molecular oxygen, creating an electrochemical gradient over the inner membrane that drives transmembrane transport and the ATP synthase. Cytochrome c oxidase is the component of the respiratory chain that catalyzes the reduction of oxygen to water. Electrons originating from reduced cytochrome c in the intermembrane space (IMS) are transferred via the dinuclear copper A center (CU(A)) of subunit 2 and heme A of subunit 1 to the active site in subunit 1, a binuclear center (BNC) formed by heme A3 and copper B (CU(B)). The BNC reduces molecular oxygen to 2 water molecules using 4 electrons from cytochrome c in the IMS and 4 protons from the mitochondrial matrix. This is Cytochrome c oxidase subunit 2 (MT-CO2) from Myxine glutinosa (Atlantic hagfish).